The chain runs to 469 residues: Glutamate--tRNA ligase (469 aa).

The 'HIGH' region motif lies at 9 to 19 (PSPTGFLHVGG). Zn(2+) contacts are provided by C98, C100, C125, and D127. Residues 236-240 (KLSKR) carry the 'KMSKS' region motif. An ATP-binding site is contributed by K239.

Belongs to the class-I aminoacyl-tRNA synthetase family. Glutamate--tRNA ligase type 1 subfamily. As to quaternary structure, monomer. Zn(2+) serves as cofactor.

It is found in the cytoplasm. It catalyses the reaction tRNA(Glu) + L-glutamate + ATP = L-glutamyl-tRNA(Glu) + AMP + diphosphate. Functionally, catalyzes the attachment of glutamate to tRNA(Glu) in a two-step reaction: glutamate is first activated by ATP to form Glu-AMP and then transferred to the acceptor end of tRNA(Glu). In Shewanella woodyi (strain ATCC 51908 / MS32), this protein is Glutamate--tRNA ligase.